The following is a 276-amino-acid chain: Undecaprenyl-diphosphatase (276 aa).

5 consecutive transmembrane segments (helical) span residues 84–104, 115–135, 188–208, 222–242, and 250–270; these read YRLGWYVIIGTIPICILGLFF, LWVVVTALVVFSGVIALAEYV, FGFLLAIPAVFASGLFSLPDA, QLLVATLIAFVLGLTAVAWLL, and MYWFVGYRVLVGTGMLVLLAT.

Belongs to the UppP family.

Its subcellular location is the cell membrane. The enzyme catalyses di-trans,octa-cis-undecaprenyl diphosphate + H2O = di-trans,octa-cis-undecaprenyl phosphate + phosphate + H(+). Its function is as follows. Catalyzes the dephosphorylation of undecaprenyl diphosphate (UPP). Confers resistance to bacitracin. The sequence is that of Undecaprenyl-diphosphatase from Mycobacterium bovis (strain ATCC BAA-935 / AF2122/97).